We begin with the raw amino-acid sequence, 280 residues long: Cyanocobalamin reductase / alkylcobalamin dealkylase (280 aa).

Substrate contacts are provided by residues D104, I115 to Q118, Y129 to Q131, C149, and I160. S245, S247, S273, and S277 each carry phosphoserine. A disordered region spans residues L256 to P280.

It belongs to the MMACHC family. In terms of assembly, monomer in the absence of bound substrate. Homodimer; dimerization is triggered by binding to FMN or adenosylcobalamin. Interacts with LMBRD1 and ABCD4; the interaction ensures the transport of cobalamin from the lysosome to the cytoplasm. Forms a multiprotein complex with MMADHC, MTR and MTRR; the interaction with MTR could modulate MMACHC-dependent processing of cobalamin. Heterodimer with MMADHC; the interaction might play a role in the regulation of the balance between AdoCbl and MeCbl synthesis. The cofactor is FAD. Requires FMN as cofactor.

The protein resides in the cytoplasm. Its subcellular location is the cytosol. The catalysed reaction is 2 cob(II)alamin-[cyanocobalamin reductase] + 2 hydrogen cyanide + NADP(+) = 2 cyanocob(III)alamin + 2 apo-[cyanocobalamin reductase] + NADPH + H(+). It catalyses the reaction apo-[alkylcobalamin reductase] + an R-cob(III)alamin + glutathione = cob(I)alamin-[alkylcobalamin reductase] + an S-substituted glutathione + H(+). The enzyme catalyses apo-[alkylcobalamin reductase] + methylcob(III)alamin + glutathione = S-methyl glutathione + cob(I)alamin-[alkylcobalamin reductase] + H(+). It carries out the reaction apo-[alkylcobalamin reductase] + adenosylcob(III)alamin + glutathione = S-adenosylglutathione + cob(I)alamin-[alkylcobalamin reductase] + H(+). Functionally, cobalamin (vitamin B12) cytosolic chaperone that catalyzes the reductive decyanation of cyanocob(III)alamin (cyanocobalamin, CNCbl) to yield cob(II)alamin and cyanide, using FAD or FMN as cofactors and NADPH as cosubstrate. Cyanocobalamin constitutes the inactive form of vitamin B12 introduced from the diet, and is converted into the active cofactors methylcobalamin (MeCbl) involved in methionine biosynthesis, and 5'-deoxyadenosylcobalamin (AdoCbl) involved in the TCA cycle. Forms a complex with the lysosomal transporter ABCD4 and its chaperone LMBRD1, to transport cobalamin across the lysosomal membrane into the cytosol. The processing of cobalamin in the cytosol occurs in a multiprotein complex composed of at least MMACHC, MMADHC, MTRR (methionine synthase reductase) and MTR (methionine synthase) which may contribute to shuttle safely and efficiently cobalamin towards MTR in order to produce methionine. Also acts as a glutathione transferase by catalyzing the dealkylation of the alkylcob(III)alamins MeCbl and AdoCbl, using the thiolate of glutathione for nucleophilic displacement to generate cob(I)alamin and the corresponding glutathione thioether. The conversion of incoming MeCbl or AdoCbl into a common intermediate cob(I)alamin is necessary to meet the cellular needs for both cofactors. Cysteine and homocysteine cannot substitute for glutathione in this reaction. The polypeptide is Cyanocobalamin reductase / alkylcobalamin dealkylase (MMACHC) (Bos taurus (Bovine)).